The sequence spans 792 residues: Alpha-1,6-mannosylglycoprotein 6-beta-N-acetylglucosaminyltransferase B (792 aa).

Residues 1-24 (MITVNPDGKIMVRRCLVTLRPFRL) lie on the Cytoplasmic side of the membrane. A helical; Signal-anchor for type II membrane protein transmembrane segment spans residues 25–45 (FVLGIGFFTLCFLMTSLGGQF). The Lumenal portion of the chain corresponds to 46-792 (SARRLGDSPF…GQVALCQGCL (747 aa)). N-linked (GlcNAc...) asparagine glycosylation is present at asparagine 127. 4 disulfides stabilise this stretch: cysteine 157/cysteine 195, cysteine 168/cysteine 208, cysteine 184/cysteine 353, and cysteine 387/cysteine 644. Asparagine 675 carries N-linked (GlcNAc...) asparagine glycosylation. Disulfide bonds link cysteine 700/cysteine 775, cysteine 704/cysteine 777, cysteine 711/cysteine 764, cysteine 732/cysteine 753, and cysteine 788/cysteine 791.

The protein belongs to the glycosyltransferase 18 family. Mn(2+) is required as a cofactor. Present in brain (at protein level). Predominantly expressed in hippocampus, superficial layers of the brain cortex, striatum, nucleus accumbens, a subset of nuclei in the thalamus, inferior colliculus, brain stem and cerebellum.

The protein localises to the golgi apparatus membrane. It carries out the reaction N(4)-{beta-D-GlcNAc-(1-&gt;2)-[beta-D-GlcNAc-(1-&gt;4)]-alpha-D-Man-(1-&gt;3)-[beta-D-GlcNAc-(1-&gt;2)-alpha-D-Man-(1-&gt;6)]-beta-D-Man-(1-&gt;4)-beta-D-GlcNAc-(1-&gt;4)-beta-D-GlcNAc}-L-asparaginyl-[protein] + UDP-N-acetyl-alpha-D-glucosamine = N(4)-{beta-D-GlcNAc-(1-&gt;2)-[beta-D-GlcNAc-(1-&gt;4)]-alpha-D-Man-(1-&gt;3)-[beta-D-GlcNAc-(1-&gt;2)-[beta-D-GlcNAc-(1-&gt;6)]-alpha-D-Man-(1-&gt;6)]-beta-D-Man-(1-&gt;4)-beta-D-GlcNAc-(1-&gt;4)-beta-D-GlcNAc}-L-asparaginyl-[protein] + UDP + H(+). It catalyses the reaction 3-O-[N-acetyl-beta-D-glucosaminyl-(1-&gt;2)-alpha-D-mannosyl]-L-seryl-[protein] + UDP-N-acetyl-alpha-D-glucosamine = O(3)-{N-acetyl-beta-D-glucosaminyl-(1-&gt;2)-[N-acetyl-beta-D-glucosaminyl-(1-&gt;6)]-alpha-D-mannosyl}-L-seryl-[protein] + UDP + H(+). The catalysed reaction is 3-O-[N-acetyl-beta-D-glucosaminyl-(1-&gt;2)-alpha-D-mannosyl]-L-threonyl-[protein] + UDP-N-acetyl-alpha-D-glucosamine = O(3)-{N-acetyl-beta-D-glucosaminyl-(1-&gt;2)-[N-acetyl-beta-D-glucosaminyl-(1-&gt;6)]-alpha-D-mannosyl}-L-threonyl-[protein] + UDP + H(+). The protein operates within protein modification; protein glycosylation. In terms of biological role, glycosyltransferase that acts on alpha-linked mannose of N-glycans and O-mannosyl glycans. Catalyzes the transfer of N-acetylglucosamine (GlcNAc) to the beta 1-6 linkage of the mannose residue of GlcNAc-beta1,2-Man-alpha on both the alpha1,3- and alpha1,6-linked mannose arms in the core structure of N-glycan. Also acts on the GlcNAc-beta1,2-Man-alpha1-Ser/Thr moiety, forming a 2,6-branched structure in brain O-mannosyl glycan. Plays an active role in modulating integrin and laminin-dependent adhesion and migration of neuronal cells via its activity in the O-mannosyl glycan pathway. The protein is Alpha-1,6-mannosylglycoprotein 6-beta-N-acetylglucosaminyltransferase B (Mgat5b) of Mus musculus (Mouse).